The following is a 217-amino-acid chain: UPF0502 protein AHA_2872 (217 aa).

The protein belongs to the UPF0502 family.

The polypeptide is UPF0502 protein AHA_2872 (Aeromonas hydrophila subsp. hydrophila (strain ATCC 7966 / DSM 30187 / BCRC 13018 / CCUG 14551 / JCM 1027 / KCTC 2358 / NCIMB 9240 / NCTC 8049)).